We begin with the raw amino-acid sequence, 218 residues long: Interleukin-37 (218 aa).

Residues 1–40 (MSFVGENSGVKMGSEDWEKDEPQCCLEDPAGSPLEPGPSL) form a disordered region. A propeptide spans 1–45 (MSFVGENSGVKMGSEDWEKDEPQCCLEDPAGSPLEPGPSLPTMNF) (removed in mature form). A compositionally biased stretch (basic and acidic residues) spans 13-22 (GSEDWEKDEP).

Belongs to the IL-1 family. Interacts with SMAD3. Binds IL18R1, but not to IL1R1, with lower affinity than IL18, and does not seem to act as a receptor antagonist for IL18. Interacts with cargo receptor TMED10; the interaction mediates the translocation from the cytoplasm into the ERGIC (endoplasmic reticulum-Golgi intermediate compartment) and thereby secretion. In terms of processing, proteolytically converted to the mature form by CASP1. In general, low constitutive expression, if any, in healthy tissues; high expression in inflammatory counterparts, including in synovial tissues from individuals with active rheumatoid arthritis. Isoform A, isoform B and isoform C are expressed in testis, colon, placenta, lung and lymph node. Isoform D and isoform E were found only in testis and bone marrow. Whereas only isoform A is found in brain, only isoform B in kidney and only isoform C in heart.

It is found in the cytoplasm. Its subcellular location is the cytosol. The protein resides in the nucleus. The protein localises to the secreted. Immune regulatory cytokine that acts as a suppressor of innate inflammatory and immune responses involved in curbing excessive inflammation. Signaling can occur via two mechanisms, intracellularly through nuclear translocation with SMAD3 and extracellularly after secretion and binding to its receptor composed of IL18R1 and IL18RAP. Suppresses, or reduces, pro-inflammatory cytokine production, including IL1A and IL6, as well as CCL12, CSF1, CSF2, CXCL13, IL1B, IL23A and IL1RN, but spares anti-inflammatory cytokines. Inhibits dendritic cell activation. This chain is Interleukin-37, found in Homo sapiens (Human).